Here is a 260-residue protein sequence, read N- to C-terminus: MADS-box transcription factor 29 (260 aa).

The 61-residue stretch at 1 to 61 (MGRGKIEIKR…GKMFEYCSPT (61 aa)) folds into the MADS-box domain. The region spanning 85–175 (DQQIFVEMTR…CRMINENHHQ (91 aa)) is the K-box domain.

As to expression, expressed in developing seeds.

The protein localises to the nucleus. Functionally, probable transcription factor. The protein is MADS-box transcription factor 29 (MADS29) of Oryza sativa subsp. japonica (Rice).